The following is a 105-amino-acid chain: Nitrogen fixation nifHD2 region GlnB-like protein 1 (105 aa).

Belongs to the P(II) protein family.

Functionally, could be involved in the regulation of nitrogen fixation. The polypeptide is Nitrogen fixation nifHD2 region GlnB-like protein 1 (Methanosarcina barkeri).